A 230-amino-acid polypeptide reads, in one-letter code: N-(5'-phosphoribosyl)anthranilate isomerase (230 aa).

It belongs to the TrpF family.

The enzyme catalyses N-(5-phospho-beta-D-ribosyl)anthranilate = 1-(2-carboxyphenylamino)-1-deoxy-D-ribulose 5-phosphate. It functions in the pathway amino-acid biosynthesis; L-tryptophan biosynthesis; L-tryptophan from chorismate: step 3/5. The sequence is that of N-(5'-phosphoribosyl)anthranilate isomerase from Trichodesmium erythraeum (strain IMS101).